Consider the following 312-residue polypeptide: Ribonuclease Z (312 aa).

The Zn(2+) site is built by H61, H63, D65, H66, H148, D216, and H275. D65 functions as the Proton acceptor in the catalytic mechanism.

It belongs to the RNase Z family. As to quaternary structure, homodimer. Zn(2+) is required as a cofactor.

It carries out the reaction Endonucleolytic cleavage of RNA, removing extra 3' nucleotides from tRNA precursor, generating 3' termini of tRNAs. A 3'-hydroxy group is left at the tRNA terminus and a 5'-phosphoryl group is left at the trailer molecule.. In terms of biological role, zinc phosphodiesterase, which displays some tRNA 3'-processing endonuclease activity. Probably involved in tRNA maturation, by removing a 3'-trailer from precursor tRNA. The sequence is that of Ribonuclease Z from Clostridium tetani (strain Massachusetts / E88).